The chain runs to 373 residues: DNA replication and repair protein RecF (373 aa).

Position 30-37 (30-37) interacts with ATP; that stretch reads GENAQGKT.

This sequence belongs to the RecF family.

It is found in the cytoplasm. In terms of biological role, the RecF protein is involved in DNA metabolism; it is required for DNA replication and normal SOS inducibility. RecF binds preferentially to single-stranded, linear DNA. It also seems to bind ATP. This chain is DNA replication and repair protein RecF, found in Limosilactobacillus fermentum (strain NBRC 3956 / LMG 18251) (Lactobacillus fermentum).